The chain runs to 181 residues: Large ribosomal subunit protein uL5 (181 aa).

The protein belongs to the universal ribosomal protein uL5 family. As to quaternary structure, part of the 50S ribosomal subunit; part of the 5S rRNA/L5/L18/L25 subcomplex. Contacts the 5S rRNA and the P site tRNA. Forms a bridge to the 30S subunit in the 70S ribosome.

Functionally, this is one of the proteins that bind and probably mediate the attachment of the 5S RNA into the large ribosomal subunit, where it forms part of the central protuberance. In the 70S ribosome it contacts protein S13 of the 30S subunit (bridge B1b), connecting the 2 subunits; this bridge is implicated in subunit movement. Contacts the P site tRNA; the 5S rRNA and some of its associated proteins might help stabilize positioning of ribosome-bound tRNAs. The protein is Large ribosomal subunit protein uL5 of Campylobacter hominis (strain ATCC BAA-381 / DSM 21671 / CCUG 45161 / LMG 19568 / NCTC 13146 / CH001A).